The chain runs to 86 residues: Large ribosomal subunit protein eL20 (86 aa).

The protein belongs to the eukaryotic ribosomal protein eL20 family. Part of the 50S ribosomal subunit. Binds 23S rRNA.

The chain is Large ribosomal subunit protein eL20 from Metallosphaera sedula (strain ATCC 51363 / DSM 5348 / JCM 9185 / NBRC 15509 / TH2).